A 620-amino-acid polypeptide reads, in one-letter code: Chaperone protein HscA homolog (620 aa).

This sequence belongs to the heat shock protein 70 family.

Chaperone involved in the maturation of iron-sulfur cluster-containing proteins. Has a low intrinsic ATPase activity which is markedly stimulated by HscB. This Pasteurella multocida (strain Pm70) protein is Chaperone protein HscA homolog.